A 170-amino-acid polypeptide reads, in one-letter code: NADPH-dependent 7-cyano-7-deazaguanine reductase (170 aa).

Cys58 (thioimide intermediate) is an active-site residue. The active-site Proton donor is the Asp65. Substrate contacts are provided by residues 80 to 82 (VES) and 99 to 100 (HE).

This sequence belongs to the GTP cyclohydrolase I family. QueF type 1 subfamily.

It localises to the cytoplasm. It catalyses the reaction 7-aminomethyl-7-carbaguanine + 2 NADP(+) = 7-cyano-7-deazaguanine + 2 NADPH + 3 H(+). It functions in the pathway tRNA modification; tRNA-queuosine biosynthesis. Its function is as follows. Catalyzes the NADPH-dependent reduction of 7-cyano-7-deazaguanine (preQ0) to 7-aminomethyl-7-deazaguanine (preQ1). This is NADPH-dependent 7-cyano-7-deazaguanine reductase from Bdellovibrio bacteriovorus (strain ATCC 15356 / DSM 50701 / NCIMB 9529 / HD100).